We begin with the raw amino-acid sequence, 156 residues long: ATP synthase subunit b 1 (156 aa).

A helical transmembrane segment spans residues 7-29; that stretch reads LLGQAISFALFVWFCMKYVWPPL.

This sequence belongs to the ATPase B chain family. As to quaternary structure, F-type ATPases have 2 components, F(1) - the catalytic core - and F(0) - the membrane proton channel. F(1) has five subunits: alpha(3), beta(3), gamma(1), delta(1), epsilon(1). F(0) has three main subunits: a(1), b(2) and c(10-14). The alpha and beta chains form an alternating ring which encloses part of the gamma chain. F(1) is attached to F(0) by a central stalk formed by the gamma and epsilon chains, while a peripheral stalk is formed by the delta and b chains.

It localises to the cell inner membrane. In terms of biological role, f(1)F(0) ATP synthase produces ATP from ADP in the presence of a proton or sodium gradient. F-type ATPases consist of two structural domains, F(1) containing the extramembraneous catalytic core and F(0) containing the membrane proton channel, linked together by a central stalk and a peripheral stalk. During catalysis, ATP synthesis in the catalytic domain of F(1) is coupled via a rotary mechanism of the central stalk subunits to proton translocation. Component of the F(0) channel, it forms part of the peripheral stalk, linking F(1) to F(0). The protein is ATP synthase subunit b 1 of Vibrio campbellii (strain ATCC BAA-1116).